The chain runs to 90 residues: Mu-theraphotoxin-Phlo1b (90 aa).

An N-terminal signal peptide occupies residues 1-22; that stretch reads MKVSVLITLAVLGVMFVWTSAA. Positions 23-50 are excised as a propeptide; sequence EQEDHGSDRRDSPALLKSLGRVFQSEER. Cystine bridges form between C52-C66, C59-C71, and C65-C79. Residue F85 is modified to Phenylalanine amide. Positions 86 to 90 are excised as a propeptide; sequence GNEKS.

It belongs to the neurotoxin 10 (Hwtx-1) family. 39 (Jztx-34) subfamily. In terms of tissue distribution, expressed by the venom gland.

It is found in the secreted. Its function is as follows. Gating-modifier toxin that inhibits voltage-gated sodium channel Nav by shifting the threshold for channel activation to more positive potentials. This toxin moderately inhibits human Nav1.7/SCN9A (IC(50)=360 nM) and weakly inhibits hNav1.2/SCN2A (37% inhibition at 1 uM peptide) and hNav1.5/SCN5A (&lt;20% inhibition at 1 uM peptide). Inhibition of Nav1.7 is voltage-dependent, with lower inhibition at more positive test pulses. This chain is Mu-theraphotoxin-Phlo1b, found in Phlogius sp. (Tarantula spider).